Here is a 417-residue protein sequence, read N- to C-terminus: UPF0761 membrane protein Daci_4966 (417 aa).

Helical transmembrane passes span 49–69, 106–126, 146–166, 187–207, 235–255, and 256–276; these read VLAL…FPIF, QLGM…ILTI, VLIY…SLVL, FIFD…LYHY, ALGL…TFAT, and LPIL…GAVV.

It belongs to the UPF0761 family.

The protein resides in the cell inner membrane. In Delftia acidovorans (strain DSM 14801 / SPH-1), this protein is UPF0761 membrane protein Daci_4966.